A 1145-amino-acid polypeptide reads, in one-letter code: Protein STU1 (1145 aa).

HEAT repeat units lie at residues 96–134 (TLPL…EKYV) and 168–206 (YVPV…KSDL). 3 disordered regions span residues 226–271 (ELIP…GIDT), 510–793 (LLNK…VVDP), and 816–839 (PEPV…PAAS). The segment covering 229 to 239 (PTSSRPETPAA) has biased composition (low complexity). The span at 535–545 (SKSTMGTSKPS) shows a compositional bias: polar residues. Composition is skewed to low complexity over residues 580–594 (TTTT…SGAR), 663–676 (ASHA…SPSS), and 696–708 (QSQS…SSPS).

Belongs to the CLASP family. In terms of assembly, interacts with microtubules.

Its subcellular location is the cytoplasm. The protein resides in the cytoskeleton. It is found in the nucleus. The protein localises to the spindle. Its function is as follows. Microtubule binding protein that promotes the stabilization of dynamic microtubules. Required for mitotic spindle formation. The sequence is that of Protein STU1 (STU1) from Gibberella zeae (strain ATCC MYA-4620 / CBS 123657 / FGSC 9075 / NRRL 31084 / PH-1) (Wheat head blight fungus).